The chain runs to 426 residues: Methylamine dehydrogenase heavy chain (426 aa).

A signal peptide spans 1–31 (MASARESTPRYLTLIGATLACSALALGAAQA). The tract at residues 32–64 (QTEPAEPEAPAETAAADAAGQTEGQRGAAEAAA) is disordered. C221 and C236 are oxidised to a cystine.

It belongs to the aromatic amine dehydrogenase heavy chain family. As to quaternary structure, tetramer of two light and two heavy chains.

The protein localises to the periplasm. It catalyses the reaction 2 oxidized [amicyanin] + methylamine + H2O = 2 reduced [amicyanin] + formaldehyde + NH4(+) + 2 H(+). Functionally, methylamine dehydrogenase carries out the oxidation of methylamine. Electrons are passed from methylamine dehydrogenase to amicyanin. The protein is Methylamine dehydrogenase heavy chain (mauB) of Paracoccus versutus (Thiobacillus versutus).